The following is a 497-amino-acid chain: Probable cytosol aminopeptidase (497 aa).

2 residues coordinate Mn(2+): K265 and D270. K277 is an active-site residue. Residues D288, D347, and E349 each coordinate Mn(2+). R351 is an active-site residue.

It belongs to the peptidase M17 family. The cofactor is Mn(2+).

The protein resides in the cytoplasm. It carries out the reaction Release of an N-terminal amino acid, Xaa-|-Yaa-, in which Xaa is preferably Leu, but may be other amino acids including Pro although not Arg or Lys, and Yaa may be Pro. Amino acid amides and methyl esters are also readily hydrolyzed, but rates on arylamides are exceedingly low.. The enzyme catalyses Release of an N-terminal amino acid, preferentially leucine, but not glutamic or aspartic acids.. Its function is as follows. Presumably involved in the processing and regular turnover of intracellular proteins. Catalyzes the removal of unsubstituted N-terminal amino acids from various peptides. In Geobacillus thermodenitrificans (strain NG80-2), this protein is Probable cytosol aminopeptidase.